A 1317-amino-acid chain; its full sequence is Immunoglobulin superfamily member 1 (1317 aa).

The signal sequence occupies residues 1–20 (MMLRTFTLLLLCIWLNPGMT). 5 consecutive Ig-like C2-type domains span residues 21–112 (SLAV…KILE), 114–211 (EAPG…KLVV), 216–302 (PKPT…SDIL), 311–398 (PKTW…ATYN), and 400–481 (VELM…HRSK). The Extracellular portion of the chain corresponds to 21-499 (SLAVESQPEL…GFLTWNSILN (479 aa)). Asparagine 43 carries an N-linked (GlcNAc...) asparagine glycan. A disulfide bridge links cysteine 48 with cysteine 96. A disulfide bridge links cysteine 238 with cysteine 286. 2 N-linked (GlcNAc...) asparagine glycosylation sites follow: asparagine 328 and asparagine 371. Disulfide bonds link cysteine 333–cysteine 382 and cysteine 422–cysteine 465. A helical transmembrane segment spans residues 500-520 (EAVRVSLTMQLASLLLLVVWI). At 521-531 (RWKCRRLRLRE) the chain is on the cytoplasmic side. The chain crosses the membrane as a helical span at residues 532 to 552 (AWLLGTAQGVAMLFILMALLC). Residues 553-1317 (CGLCNGALTE…EVSVELTVPI (765 aa)) are Extracellular-facing. 7 consecutive Ig-like C2-type domains span residues 570–658 (TPKP…ALEL), 659–753 (VGTD…ELVI), 758–850 (PKPF…LVVT), 854–938 (PKPT…SSLS), 946–1041 (TDTF…ELIV), 1046–1131 (PKPS…NHSN), and 1142–1223 (PKPS…EPSD). Residues cysteine 780 and cysteine 830 are joined by a disulfide bond. N-linked (GlcNAc...) asparagine glycosylation is present at asparagine 871. Cysteine 876 and cysteine 923 are oxidised to a cystine. N-linked (GlcNAc...) asparagine glycans are attached at residues asparagine 967 and asparagine 1063. Intrachain disulfides connect cysteine 1068–cysteine 1115 and cysteine 1164–cysteine 1207. Residues 1290–1310 (NQEGEPGTTTNSPSSASQEVS) are disordered. Residues 1296–1309 (GTTTNSPSSASQEV) are compositionally biased toward polar residues.

In terms of assembly, interacts with INHA; the interaction is not confirmed by standard receptor binding assays. Interacts with ACVR1B; the interaction appears to be ligand-dependent as it is diminished by inhibin B and activin A. Interacts with ACVR2A, ACVR2B, ACVRL1 and BMPR1B. Interacts with HECTD1.

The protein resides in the membrane. It localises to the secreted. Its function is as follows. Seems to be a coreceptor in inhibin signaling, but seems not to be a high-affinity inhibin receptor. Antagonizes activin A signaling in the presence or absence of inhibin B. Necessary to mediate a specific antagonistic effect of inhibin B on activin-stimulated transcription. The protein is Immunoglobulin superfamily member 1 (Igsf1) of Mus musculus (Mouse).